Here is a 589-residue protein sequence, read N- to C-terminus: Progranulin (589 aa).

Residues 1-17 (MWVLMSWLAFAAGLVAG) form the signal peptide. Asparagine 38 is a glycosylation site (N-linked (GlcNAc...) asparagine). 2 disulfide bridges follow: cysteine 125–cysteine 138 and cysteine 132–cysteine 148. An N-linked (GlcNAc...) asparagine glycan is attached at asparagine 263. 10 disulfides stabilise this stretch: cysteine 282/cysteine 294, cysteine 288/cysteine 304, cysteine 295/cysteine 312, cysteine 305/cysteine 319, cysteine 313/cysteine 326, cysteine 320/cysteine 333, cysteine 364/cysteine 376, cysteine 370/cysteine 386, cysteine 395/cysteine 408, and cysteine 402/cysteine 414. An N-linked (GlcNAc...) asparagine glycan is attached at asparagine 373. N-linked (GlcNAc...) asparagine glycosylation is present at asparagine 526.

The protein belongs to the granulin family. Progranulin is secreted as a homodimer. Interacts with SLPI; interaction protects progranulin from proteolysis. Interacts (via region corresponding to granulin-7 peptide) with CTSD; stabilizes CTSD and increases its proteolytic activity. Interacts (via region corresponding to granulin-7 peptide) with SORT1; this interaction mediates endocytosis and lysosome delivery of progranulin; interaction occurs at the neuronal cell surface in a stressed nervous system. Interacts with PSAP; facilitates lysosomal delivery of progranulin from the extracellular space and the biosynthetic pathway. Forms a complex with PSAP and M6PR; PSAP bridges the binding between progranulin and M6PR. Forms a complex with PSAP and SORT1; progranulin bridges the interaction between PSAP and SORT1; facilitates lysosomal targeting of PSAP via SORT1; interaction enhances PSAP uptake in primary cortical neurons. Interacts (via regions corresponding to granulin-2 and granulin-7 peptides) with GBA1; this interaction prevents aggregation of GBA1-SCARB2 complex via interaction with HSPA1A upon stress. Interacts (via region corresponding to granulin-7 peptide) with HSPA1A; mediates recruitment of HSPA1A to GBA1 and prevents GBA1 aggregation in response to stress. N-glycosylated. In terms of processing, cleaved by ELANE; proteolysis is blocked by SLPI and is concentration- and time-dependent and induces CXCL8/IL-8 production; granulin-3 and granulin-4 are resistant to ELANE. Cleaved by CTSL in lysosome thus regulating the maturation and turnover of progranulin within the lysosome. Highly expressed at the wound site and diminishes away from the wound. Not expressed in fibroblasts and endothelial cells in intact skin. In adult brain, expressed primarily in neurons and in resting and reactive microglia. Expressed in both neurons and microglia. Highly expressed in activated microglia in response to injury. Expressed in macrophage.

The protein resides in the secreted. The protein localises to the lysosome. Secreted protein that acts as a key regulator of lysosomal function and as a growth factor involved in inflammation, wound healing and cell proliferation. Regulates protein trafficking to lysosomes, and also the activity of lysosomal enzymes. Also facilitates the acidification of lysosomes, causing degradation of mature CTSD by CTSB. In addition, functions as a wound-related growth factor that acts directly on dermal fibroblasts and endothelial cells to promote division, migration and the formation of capillary-like tubule structures. Also promotes epithelial cell proliferation by blocking TNF-mediated neutrophil activation preventing release of oxidants and proteases. Moreover, modulates inflammation in neurons by preserving neurons survival, axonal outgrowth and neuronal integrity. Its function is as follows. Inhibits epithelial cell proliferation and induces epithelial cells to secrete IL-8. In terms of biological role, stabilizes CTSD through interaction with CTSD leading to maintain its aspartic-type peptidase activity. This chain is Progranulin (Grn), found in Mus musculus (Mouse).